The sequence spans 913 residues: Transient receptor potential cation channel protein painless (913 aa).

The Cytoplasmic portion of the chain corresponds to 1–490; that stretch reads MDFNNCGFID…SSFLFLKWHR (490 aa). 3 ANK repeats span residues 154–189, 260–289, and 368–397; these read GEFT…DIDS, EYFG…DINS, and GRLV…YIGS. A helical transmembrane segment spans residues 491 to 511; the sequence is LSVIFYLNFLIYSLFTASIIT. The Extracellular segment spans residues 512–523; the sequence is YTLLKFHESDQR. The chain crosses the membrane as a helical span at residues 524 to 544; the sequence is ALTAFFGLLSWLGISYLILRE. At 545-555 the chain is on the cytoplasmic side; the sequence is CIQWIMSPVRY. A helical membrane pass occupies residues 556 to 576; that stretch reads FWSITNIMEVALITLSIFTCM. The Extracellular portion of the chain corresponds to 577–586; sequence ESSFDKETQR. Residues 587–607 form a helical membrane-spanning segment; the sequence is VLAVFTILLVSMEFCLLVGSL. Over 608–628 the chain is Cytoplasmic; it reads PVLSISTHMLMLREVSNSFLK. The chain crosses the membrane as a helical span at residues 629-649; that stretch reads SFTLYSIFVLTFSLCFYILFG. Residues 650 to 708 lie on the Extracellular side of the membrane; sequence KSVEEDQSKSATPCPPLGKKEGKDEEQGFNTFTKPIEAVIKTIVMLTGEFDAGSIQFTS. The tract at residues 656–675 is disordered; the sequence is QSKSATPCPPLGKKEGKDEE. Residues 709-729 traverse the membrane as a helical segment; that stretch reads IYTYLIFLLFVIFMTIVLFNL. Over 730 to 913 the chain is Cytoplasmic; that stretch reads LNGLAVSDTQ…QLIQLVQDRK (184 aa).

This sequence belongs to the transient receptor (TC 1.A.4) family. In terms of tissue distribution, present in multidendritic neurons, chordotonal neurons, a subset of cells in the central nervous system and a subset of sensory neurons in the antennal-maxillary complex. Not detected in gonads and dorsal vessels (at protein level). Expressed in peripheral neurons that extend multiple branched dendrites beneath the larval epidermis, similar to vertebrate pain receptors.

Its subcellular location is the membrane. Receptor-activated non-selective cation channel involved in detection of pain sensation due to high temperature. Involved in heat nociception by being activated by noxious temperature of 38 degrees Celsius. The chain is Transient receptor potential cation channel protein painless (pain) from Drosophila melanogaster (Fruit fly).